A 228-amino-acid polypeptide reads, in one-letter code: Orotidine 5'-phosphate decarboxylase (228 aa).

Residues D10, K33, 60–69, T116, R178, Q187, G207, and R208 contribute to the substrate site; that span reads DLKLYDIPHT. Residue K62 is the Proton donor of the active site.

This sequence belongs to the OMP decarboxylase family. Type 1 subfamily. As to quaternary structure, homodimer.

The catalysed reaction is orotidine 5'-phosphate + H(+) = UMP + CO2. Its pathway is pyrimidine metabolism; UMP biosynthesis via de novo pathway; UMP from orotate: step 2/2. In terms of biological role, catalyzes the decarboxylation of orotidine 5'-monophosphate (OMP) to uridine 5'-monophosphate (UMP). In Oenococcus oeni (strain ATCC BAA-331 / PSU-1), this protein is Orotidine 5'-phosphate decarboxylase.